We begin with the raw amino-acid sequence, 769 residues long: Glutathione biosynthesis bifunctional protein GshAB (769 aa).

Residues 1–347 (MLDSFKENEA…QLADENENNI (347 aa)) are glutamate--cysteine ligase. The ATP-grasp domain maps to 514-768 (KLVLAEHGIR…IGDKILDFLF (255 aa)). 541-599 (SLFEDKQIVVKPKSTNYGWGISIFKNKFTLEDYQEALNIAFSYDSSVIIEEFIPGDEFR) contributes to the ATP binding site. 3 residues coordinate Mg(2+): aspartate 721, glutamate 738, and asparagine 740. Residues aspartate 721, glutamate 738, and asparagine 740 each contribute to the Mn(2+) site.

In the N-terminal section; belongs to the glutamate--cysteine ligase type 1 family. Type 2 subfamily. As to quaternary structure, monomer. Mg(2+) serves as cofactor. Mn(2+) is required as a cofactor.

The catalysed reaction is L-cysteine + L-glutamate + ATP = gamma-L-glutamyl-L-cysteine + ADP + phosphate + H(+). It catalyses the reaction gamma-L-glutamyl-L-cysteine + glycine + ATP = glutathione + ADP + phosphate + H(+). It participates in sulfur metabolism; glutathione biosynthesis; glutathione from L-cysteine and L-glutamate: step 1/2. The protein operates within sulfur metabolism; glutathione biosynthesis; glutathione from L-cysteine and L-glutamate: step 2/2. Functionally, synthesizes glutathione from L-glutamate and L-cysteine via gamma-L-glutamyl-L-cysteine. This Listeria innocua serovar 6a (strain ATCC BAA-680 / CLIP 11262) protein is Glutathione biosynthesis bifunctional protein GshAB.